A 148-amino-acid chain; its full sequence is Urease accessory protein UreE (148 aa).

It belongs to the UreE family.

It localises to the cytoplasm. Functionally, involved in urease metallocenter assembly. Binds nickel. Probably functions as a nickel donor during metallocenter assembly. This is Urease accessory protein UreE from Lysinibacillus sphaericus (strain C3-41).